The following is a 125-amino-acid chain: UPF0102 protein CCNA_00142 (125 aa).

The protein belongs to the UPF0102 family.

This Caulobacter vibrioides (strain NA1000 / CB15N) (Caulobacter crescentus) protein is UPF0102 protein CCNA_00142.